The primary structure comprises 223 residues: Proteinase inhibitor type-2 TR8 (223 aa).

The signal sequence occupies residues 1 to 24 (MAIYKVALLLLFGMILLASDFEHA). 3 repeat units span residues 24–81 (AKAC…EWVS), 88–145 (KKAC…EWVS), and 152–209 (EKDC…EWVS). Disulfide bonds link Cys27-Cys120, Cys31-Cys116, Cys40-Cys126, Cys52-Cys95, Cys55-Cys73, Cys56-Cys91, Cys62-Cys104, and Cys119-Cys137.

This sequence belongs to the protease inhibitor I20 (potato type II proteinase inhibitor) family.

This Solanum lycopersicum (Tomato) protein is Proteinase inhibitor type-2 TR8 (ARPI).